Here is a 488-residue protein sequence, read N- to C-terminus: Probable glycine dehydrogenase (decarboxylating) subunit 2 (488 aa).

Residue K264 is modified to N6-(pyridoxal phosphate)lysine.

The protein belongs to the GcvP family. C-terminal subunit subfamily. The glycine cleavage system is composed of four proteins: P, T, L and H. In this organism, the P 'protein' is a heterodimer of two subunits. Pyridoxal 5'-phosphate serves as cofactor.

It carries out the reaction N(6)-[(R)-lipoyl]-L-lysyl-[glycine-cleavage complex H protein] + glycine + H(+) = N(6)-[(R)-S(8)-aminomethyldihydrolipoyl]-L-lysyl-[glycine-cleavage complex H protein] + CO2. Functionally, the glycine cleavage system catalyzes the degradation of glycine. The P protein binds the alpha-amino group of glycine through its pyridoxal phosphate cofactor; CO(2) is released and the remaining methylamine moiety is then transferred to the lipoamide cofactor of the H protein. This Methylococcus capsulatus (strain ATCC 33009 / NCIMB 11132 / Bath) protein is Probable glycine dehydrogenase (decarboxylating) subunit 2.